The sequence spans 332 residues: Methylthioribose-1-phosphate isomerase (332 aa).

Residues 44–46 (RGA), R87, and Q192 each bind substrate. Catalysis depends on D233, which acts as the Proton donor. Position 243 to 244 (243 to 244 (NK)) interacts with substrate.

Belongs to the eIF-2B alpha/beta/delta subunits family. MtnA subfamily.

It catalyses the reaction 5-(methylsulfanyl)-alpha-D-ribose 1-phosphate = 5-(methylsulfanyl)-D-ribulose 1-phosphate. The protein operates within amino-acid biosynthesis; L-methionine biosynthesis via salvage pathway; L-methionine from S-methyl-5-thio-alpha-D-ribose 1-phosphate: step 1/6. In terms of biological role, catalyzes the interconversion of methylthioribose-1-phosphate (MTR-1-P) into methylthioribulose-1-phosphate (MTRu-1-P). This is Methylthioribose-1-phosphate isomerase from Dehalococcoides mccartyi (strain ATCC BAA-2100 / JCM 16839 / KCTC 5957 / BAV1).